The following is a 367-amino-acid chain: Glutamate 5-kinase (367 aa).

Residue Lys10 participates in ATP binding. Ser50, Asp137, and Asn149 together coordinate substrate. ATP-binding positions include 169–170 (TD) and 211–217 (TGGMGTK). The PUA domain maps to 275–353 (AGEITVDDGA…QEISEILGYE (79 aa)).

This sequence belongs to the glutamate 5-kinase family.

The protein resides in the cytoplasm. It catalyses the reaction L-glutamate + ATP = L-glutamyl 5-phosphate + ADP. It functions in the pathway amino-acid biosynthesis; L-proline biosynthesis; L-glutamate 5-semialdehyde from L-glutamate: step 1/2. With respect to regulation, proline-mediated feedback inhibition. Its function is as follows. Catalyzes the transfer of a phosphate group to glutamate to form L-glutamate 5-phosphate. This chain is Glutamate 5-kinase, found in Serratia marcescens.